The primary structure comprises 336 residues: Inositol 2-dehydrogenase (336 aa).

It belongs to the Gfo/Idh/MocA family. In terms of assembly, homotetramer.

The catalysed reaction is myo-inositol + NAD(+) = scyllo-inosose + NADH + H(+). Involved in the oxidation of myo-inositol (MI) to 2-keto-myo-inositol (2KMI or 2-inosose). This chain is Inositol 2-dehydrogenase, found in Acidiphilium cryptum (strain JF-5).